The primary structure comprises 290 residues: Inner membrane protein YebZ (290 aa).

The Periplasmic portion of the chain corresponds to 1 to 10; sequence MLAFTWIALR. Residues 11–31 traverse the membrane as a helical segment; sequence FIHFTSLMLVFGFAMYGAWLA. At 32-49 the chain is on the cytoplasmic side; that stretch reads PLTIRRLLAKRFLRLQQH. The helical transmembrane segment at 50-70 threads the bilayer; that stretch reads AAVWSLISATAMLAVQGGLMG. The Periplasmic portion of the chain corresponds to 71 to 89; it reads TGWTDVFSPNIWQAVLQTQ. A helical transmembrane segment spans residues 90-110; the sequence is FGGIWLWQIVLALVTLIVALM. The Cytoplasmic portion of the chain corresponds to 111-117; the sequence is QPRNMPR. A helical transmembrane segment spans residues 118 to 138; it reads LLFMLTTAQFILLAGVGHATL. Over 139–151 the chain is Periplasmic; it reads NEGVTAKIHQTNH. Residues 152 to 172 form a helical membrane-spanning segment; sequence AIHLICAAAWFGGLLPVLWCM. The Cytoplasmic segment spans residues 173 to 195; sequence QLIKGRWRHQAIQALMRFSWCGH. Residues 196 to 216 traverse the membrane as a helical segment; the sequence is FAVIGVLASGVLNALLITGFP. Residues 217 to 222 are Periplasmic-facing; sequence PTLTTY. Residues 223-243 traverse the membrane as a helical segment; the sequence is WGQLLLLKAILVMIMVVIALA. The Cytoplasmic portion of the chain corresponds to 244-260; it reads NRYVLVPRMRQDEDRAA. Residues 261-281 traverse the membrane as a helical segment; that stretch reads PWFVWMTKLEWAIGAVVLVII. Residues 282–290 lie on the Periplasmic side of the membrane; the sequence is SLLATLEPF.

The protein belongs to the CopD family.

Its subcellular location is the cell inner membrane. In Escherichia coli (strain K12), this protein is Inner membrane protein YebZ (yebZ).